A 393-amino-acid polypeptide reads, in one-letter code: Homoserine O-succinyltransferase (393 aa).

The region spanning 62–372 (NAVLVCHALN…PHGHDAFLLD (311 aa)) is the AB hydrolase-1 domain. The active-site Nucleophile is Ser-168. Arg-238 lines the substrate pocket. Catalysis depends on residues Asp-333 and His-366. Residue Asp-367 participates in substrate binding.

It belongs to the AB hydrolase superfamily. MetX family. In terms of assembly, homodimer.

Its subcellular location is the cytoplasm. It carries out the reaction L-homoserine + succinyl-CoA = O-succinyl-L-homoserine + CoA. The protein operates within amino-acid biosynthesis; L-methionine biosynthesis via de novo pathway; O-succinyl-L-homoserine from L-homoserine: step 1/1. Transfers a succinyl group from succinyl-CoA to L-homoserine, forming succinyl-L-homoserine. The chain is Homoserine O-succinyltransferase from Cupriavidus taiwanensis (strain DSM 17343 / BCRC 17206 / CCUG 44338 / CIP 107171 / LMG 19424 / R1) (Ralstonia taiwanensis (strain LMG 19424)).